A 787-amino-acid polypeptide reads, in one-letter code: Integrin beta-6 (787 aa).

Positions 1–21 are cleaved as a signal peptide; it reads MGIELVCLFLLLLGRNDHVQG. Residues 22–71 form the PSI domain; that stretch reads GCAWGGAESCSDCLLTGPHCAWCSQENFTHLSGAGERCDTPANLLAKGCQ. Residues 22-708 lie on the Extracellular side of the membrane; sequence GCAWGGAESC…KDCPKPPNIP (687 aa). Cystine bridges form between Cys23–Cys41, Cys31–Cys454, Cys34–Cys59, Cys44–Cys70, Cys197–Cys204, Cys252–Cys293, Cys394–Cys406, Cys426–Cys452, Cys456–Cys476, Cys467–Cys479, Cys481–Cys490, Cys492–Cys519, Cys502–Cys517, Cys511–Cys522, Cys524–Cys537, Cys539–Cys560, Cys544–Cys558, Cys552–Cys563, and Cys565–Cys574. Residues Asn48 and Asn97 are each glycosylated (N-linked (GlcNAc...) asparagine). Residues 131–371 enclose the VWFA domain; that stretch reads YPVDLYYLMD…QLIISAYEEL (241 aa). Mg(2+)-binding residues include Asp140, Ser142, and Ser144. Residues Ser144, Asp147, Asp148, and Glu179 each coordinate Ca(2+). Positions 235, 237, 239, and 240 each coordinate Ca(2+). A Mg(2+)-binding site is contributed by Glu240. Asn260 is a glycosylation site (N-linked (GlcNAc...) asparagine). Positions 271 and 355 each coordinate Ca(2+). Asn387 carries an N-linked (GlcNAc...) asparagine glycan. Residue Asn418 is glycosylated (N-linked (GlcNAc...) asparagine). I-EGF domains lie at 456-491, 492-538, 539-575, and 576-615; these read CQRE…PHCE, CGED…PYCQ, CDNF…EYCN, and CTTN…PTCE. Asn463 and Asn471 each carry an N-linked (GlcNAc...) asparagine glycan. Asn541 carries an N-linked (GlcNAc...) asparagine glycan. Asn575 carries N-linked (GlcNAc...) asparagine glycosylation. 9 disulfide bridges follow: Cys576/Cys599, Cys583/Cys597, Cys591/Cys602, Cys604/Cys614, Cys617/Cys620, Cys624/Cys669, Cys630/Cys649, Cys633/Cys645, and Cys677/Cys701. A helical membrane pass occupies residues 709–729; the sequence is MIMLGVSLAILLIGVVLLCIW. Positions 730 to 757 are interaction with HAX1; it reads KLLVSFHDRKEVAKFEAERSKAKWQTGT. Over 730–787 the chain is Cytoplasmic; it reads KLLVSFHDRKEVAKFEAERSKAKWQTGTNPLYRGSTSTFKNVTYKHREKHKAGLSSDG.

Belongs to the integrin beta chain family. Heterodimer of an alpha and a beta subunit. Interacts with FLNB. Interacts with HAX1. ITGAV:ITGB6 interacts with FBN1. ITGAV:ITGB6 interacts with TGFB1.

The protein resides in the cell membrane. Its subcellular location is the cell junction. The protein localises to the focal adhesion. In terms of biological role, integrin alpha-V:beta-6 (ITGAV:ITGB6) is a receptor for fibronectin and cytotactin. It recognizes the sequence R-G-D in its ligands. ITGAV:ITGB6 acts as a receptor for fibrillin-1 (FBN1) and mediates R-G-D-dependent cell adhesion to FBN1. Integrin alpha-V:beta-6 (ITGAV:ITGB6) mediates R-G-D-dependent release of transforming growth factor beta-1 (TGF-beta-1) from regulatory Latency-associated peptide (LAP), thereby playing a key role in TGF-beta-1 activation. This chain is Integrin beta-6 (Itgb6), found in Mus musculus (Mouse).